A 419-amino-acid polypeptide reads, in one-letter code: Phospho-N-acetylmuramoyl-pentapeptide-transferase (419 aa).

10 helical membrane passes run Tyr-22–Gly-42, Thr-72–Ala-92, Ile-99–Ile-119, Ile-135–Val-155, Val-208–Asn-228, Gly-238–Ser-258, Leu-278–Tyr-298, Phe-303–Ile-323, Leu-328–Phe-348, and Lys-396–Leu-416.

The protein belongs to the glycosyltransferase 4 family. MraY subfamily. Requires Mg(2+) as cofactor.

It is found in the cell inner membrane. The catalysed reaction is UDP-N-acetyl-alpha-D-muramoyl-L-alanyl-gamma-D-glutamyl-meso-2,6-diaminopimeloyl-D-alanyl-D-alanine + di-trans,octa-cis-undecaprenyl phosphate = di-trans,octa-cis-undecaprenyl diphospho-N-acetyl-alpha-D-muramoyl-L-alanyl-D-glutamyl-meso-2,6-diaminopimeloyl-D-alanyl-D-alanine + UMP. Its pathway is cell wall biogenesis; peptidoglycan biosynthesis. Functionally, catalyzes the initial step of the lipid cycle reactions in the biosynthesis of the cell wall peptidoglycan: transfers peptidoglycan precursor phospho-MurNAc-pentapeptide from UDP-MurNAc-pentapeptide onto the lipid carrier undecaprenyl phosphate, yielding undecaprenyl-pyrophosphoryl-MurNAc-pentapeptide, known as lipid I. This Porphyromonas gingivalis (strain ATCC BAA-308 / W83) protein is Phospho-N-acetylmuramoyl-pentapeptide-transferase.